A 222-amino-acid chain; its full sequence is Peptide methionine sulfoxide reductase MsrA (222 aa).

C60 is a catalytic residue.

The protein belongs to the MsrA Met sulfoxide reductase family.

It catalyses the reaction L-methionyl-[protein] + [thioredoxin]-disulfide + H2O = L-methionyl-(S)-S-oxide-[protein] + [thioredoxin]-dithiol. It carries out the reaction [thioredoxin]-disulfide + L-methionine + H2O = L-methionine (S)-S-oxide + [thioredoxin]-dithiol. Its function is as follows. Has an important function as a repair enzyme for proteins that have been inactivated by oxidation. Catalyzes the reversible oxidation-reduction of methionine sulfoxide in proteins to methionine. This Pseudomonas putida (strain W619) protein is Peptide methionine sulfoxide reductase MsrA.